Here is a 545-residue protein sequence, read N- to C-terminus: Glucose-6-phosphate isomerase (545 aa).

E351 serves as the catalytic Proton donor. Residues H382 and K510 contribute to the active site.

This sequence belongs to the GPI family.

It is found in the cytoplasm. The enzyme catalyses alpha-D-glucose 6-phosphate = beta-D-fructose 6-phosphate. The protein operates within carbohydrate biosynthesis; gluconeogenesis. It functions in the pathway carbohydrate degradation; glycolysis; D-glyceraldehyde 3-phosphate and glycerone phosphate from D-glucose: step 2/4. Catalyzes the reversible isomerization of glucose-6-phosphate to fructose-6-phosphate. The protein is Glucose-6-phosphate isomerase of Shewanella sediminis (strain HAW-EB3).